Reading from the N-terminus, the 271-residue chain is Putative F-box protein L165 (271 aa).

In terms of domain architecture, F-box spans 4–49 (ICELFDDVILEIMNLLSDTDKINFMFCCSRFYYFIDLVYYNDIYDY). The disordered stretch occupies residues 251-271 (NIPKIVPKNTHYRNSSKKYRY). Residues 260–271 (THYRNSSKKYRY) show a composition bias toward basic residues.

This Acanthamoeba polyphaga mimivirus (APMV) protein is Putative F-box protein L165.